The primary structure comprises 347 residues: MNILGIETSCDETSASVVQNGRVTSNIISSQLIHTSYGGVVPELASREHERLIVSVVDAAVNEANIQKNDLDVIAATAGPGLIGAVMVGLCFAQGLAYVLDKPLVPVNHIEAHIFSGFIHEGPDHDPPKEAFISLTVSGGHTMLSVVQQDLTYQVIGRTIDDAAGEAFDKTGKMLGLDYPAGPVIDRLAADGDPGFHEFPRALTSQSRTSKSYRNNFDFSFSGLKTSVLHYIGKQDPSYIERHLQDIAASVQEAITSVLVEKTVAAAKKYRINAISVAGGVSANSGLRQKMAVACEANGLRLYIPKPVYSTDNAAMIATFAHLKLSRGTTTPNTYDIAPFASFETQG.

Fe cation contacts are provided by His-109 and His-113. Substrate is bound by residues 136–140 (TVSGG), Asp-169, Gly-182, Asp-186, and Asn-284. Asp-312 is a Fe cation binding site.

It belongs to the KAE1 / TsaD family. It depends on Fe(2+) as a cofactor.

It is found in the cytoplasm. The enzyme catalyses L-threonylcarbamoyladenylate + adenosine(37) in tRNA = N(6)-L-threonylcarbamoyladenosine(37) in tRNA + AMP + H(+). Required for the formation of a threonylcarbamoyl group on adenosine at position 37 (t(6)A37) in tRNAs that read codons beginning with adenine. Is involved in the transfer of the threonylcarbamoyl moiety of threonylcarbamoyl-AMP (TC-AMP) to the N6 group of A37, together with TsaE and TsaB. TsaD likely plays a direct catalytic role in this reaction. This Chlorobium phaeobacteroides (strain BS1) protein is tRNA N6-adenosine threonylcarbamoyltransferase.